The sequence spans 207 residues: Small ribosomal subunit protein uS4c (207 aa).

Positions 92 to 155 (MRLDNILFRL…TYQSILSKRI (64 aa)) constitute an S4 RNA-binding domain.

It belongs to the universal ribosomal protein uS4 family. Part of the 30S ribosomal subunit. Contacts protein S5. The interaction surface between S4 and S5 is involved in control of translational fidelity.

It localises to the plastid. The protein localises to the chloroplast. In terms of biological role, one of the primary rRNA binding proteins, it binds directly to 16S rRNA where it nucleates assembly of the body of the 30S subunit. Its function is as follows. With S5 and S12 plays an important role in translational accuracy. This chain is Small ribosomal subunit protein uS4c (rps4), found in Equisetum giganteum (Giant horsetail).